The chain runs to 300 residues: uncharacterized protein (300 aa).

The HTH lysR-type domain occupies 10–67; the sequence is FDLNLLVIFECIYQHLSISKAAESLYITPSAVSQSLQRLRAQFNDPLFIRSGKGIAPT. Residues 27 to 46 constitute a DNA-binding region (H-T-H motif); that stretch reads ISKAAESLYITPSAVSQSLQ.

This sequence belongs to the LysR transcriptional regulatory family.

This is an uncharacterized protein from Escherichia coli (strain K12).